The sequence spans 929 residues: Ribonucleoside-diphosphate reductase large chain (929 aa).

The ATP-cone domain occupies 1 to 92 (MYVKKRDGRQ…VSNLHKQTKK (92 aa)). ATP is bound by residues 5 to 6 (KR), 11 to 17 (ERVQFDK), Thr53, and Asp57. GDP contacts are provided by Ser202 and Ser217. Residues Cys218 and Cys444 are joined by a disulfide bond. DTTP-binding positions include 226 to 228 (DSI), Lys243, Arg256, and 263 to 264 (AG). A GDP-binding site is contributed by Asn427. The active-site Proton acceptor is the Asn427. Cys429 (cysteine radical intermediate) is an active-site residue. GDP contacts are provided by residues Glu431 and 605–608 (TAST). The active-site Proton acceptor is Glu431. Residues 789-904 (ENTSGPRPYA…RDENIYSNAP (116 aa)) form a disordered region. Polar residues predominate over residues 800–809 (TGVSGTSTPI). The segment covering 868–884 (VKTEDIGSPLLERKEGQ) has biased composition (basic and acidic residues). Over residues 885-894 (NEDVDEDSQE) the composition is skewed to acidic residues.

This sequence belongs to the ribonucleoside diphosphate reductase large chain family.

The catalysed reaction is a 2'-deoxyribonucleoside 5'-diphosphate + [thioredoxin]-disulfide + H2O = a ribonucleoside 5'-diphosphate + [thioredoxin]-dithiol. Under complex allosteric control mediated by deoxynucleoside triphosphates and ATP binding to separate specificity and activation sites on the large subunit. The type of nucleotide bound at the specificity site determines substrate preference. It seems probable that ATP makes the enzyme reduce CDP and UDP, dGTP favors ADP reduction and dTTP favors GDP reduction. Stimulated by ATP and inhibited by dATP binding to the activity site. Functionally, provides the precursors necessary for DNA synthesis. Catalyzes the biosynthesis of deoxyribonucleotides from the corresponding ribonucleotides. The chain is Ribonucleoside-diphosphate reductase large chain (rnr-1) from Neurospora crassa (strain ATCC 24698 / 74-OR23-1A / CBS 708.71 / DSM 1257 / FGSC 987).